Here is a 237-residue protein sequence, read N- to C-terminus: Small ribosomal subunit protein uS3 (237 aa).

The 69-residue stretch at 39-107 folds into the KH type-2 domain; that stretch reads IRAYLMEELK…ETHLNIVEVR (69 aa). The disordered stretch occupies residues 213–237; the sequence is MASERRATESDNQGGGGRDRRRENA.

Belongs to the universal ribosomal protein uS3 family. As to quaternary structure, part of the 30S ribosomal subunit. Forms a tight complex with proteins S10 and S14.

In terms of biological role, binds the lower part of the 30S subunit head. Binds mRNA in the 70S ribosome, positioning it for translation. In Sinorhizobium fredii (strain NBRC 101917 / NGR234), this protein is Small ribosomal subunit protein uS3.